The following is a 175-amino-acid chain: Ribonuclease M5 (175 aa).

Residues 3-83 (NEIIIVEGKS…DVDVFNAFVS (81 aa)) enclose the Toprim domain. Residues E9, D57, and D59 each coordinate Mg(2+).

The protein belongs to the ribonuclease M5 family. Mg(2+) is required as a cofactor.

It localises to the cytoplasm. The catalysed reaction is Endonucleolytic cleavage of RNA, removing 21 and 42 nucleotides, respectively, from the 5'- and 3'-termini of a 5S-rRNA precursor.. Functionally, required for correct processing of both the 5' and 3' ends of 5S rRNA precursor. Cleaves both sides of a double-stranded region yielding mature 5S rRNA in one step. The polypeptide is Ribonuclease M5 (Mesoplasma florum (strain ATCC 33453 / NBRC 100688 / NCTC 11704 / L1) (Acholeplasma florum)).